Reading from the N-terminus, the 840-residue chain is Radial spoke head 10 homolog B (840 aa).

Composition is skewed to basic and acidic residues over residues 1–16 (MVKE…DKSA) and 51–63 (QPKD…EVKS). Residues 1–74 (MVKEKKKADK…SLPNEDTTQY (74 aa)) form a disordered region. 10 MORN repeats span residues 86–108 (SYEG…QGGC), 109–131 (TYQG…ADGL), 132–154 (KYEG…PDGS), 155–177 (TYEG…STQP), 179–201 (SYIG…NQEG), 204–226 (WYEG…KSGN), 227–249 (IYEG…LTTN), 251–273 (EYTG…FLKR), 284–306 (EYVG…ASGA), and 307–329 (MYEG…KNGR). Residues 758–801 (KEKVKENRLHNEAMALQRKMENEELEARLNSLREEEAKRQDYEV) adopt a coiled-coil conformation. The tract at residues 810-840 (VDAPSSSFTPSPPKEDTVVSSKSITSKKKKK) is disordered.

As to quaternary structure, interacts with RSPH6A. Does not appear to be part of the axonemal radial spoke complexes 1 or 2.

The protein resides in the cytoplasm. It is found in the cytoskeleton. It localises to the cilium axoneme. Its subcellular location is the cell projection. The protein localises to the cilium. The protein resides in the flagellum. Functionally, may function as part of the axonemal radial spoke complex 3 (RS3). Radial spoke complexes are important for ciliary motility. In Bos taurus (Bovine), this protein is Radial spoke head 10 homolog B (RSPH10B).